Consider the following 70-residue polypeptide: Dermaseptin-PH (70 aa).

The N-terminal stretch at 1–22 is a signal peptide; the sequence is MDILKKSLFLILFLGVVSLSIC. Positions 23 to 44 are excised as a propeptide; the sequence is EEEKRENEEEMEQDDEQSEMKR. Gln67 carries the glutamine amide modification. Residues 68 to 70 constitute a propeptide that is removed on maturation; sequence GGQ.

It belongs to the frog skin active peptide (FSAP) family. As to expression, expressed by the skin glands.

The protein resides in the secreted. It localises to the target cell membrane. Antimicrobial peptide which inhibits the growth of Gram-negative (MIC=16-64 uM) and Gram-positive bacteria (MIC=32 uM), and pathogenic yeast Candida albicans (MIC=16 uM). Shows a broad-spectrum of anticancer activities against several cancer cell lines. Also shows slight cytotoxicity on human dermal microvascular endothelium cells (IC(50)=4.85 uM). Induces low hemolysis against horse erythrocytes. This Pithecopus hypochondrialis (Orange-legged leaf frog) protein is Dermaseptin-PH.